The chain runs to 417 residues: MHLLYVGLTHRETPLTILEKAHFSDQEGLKALKLLKREKSILENIILSTCNRTELYLVVDQLHTGRYYSKHFLADWFQIPVKELEEYLVFREGDEALRHLLRVSIGLESKIVGESQVLGQLKQAFLTAQDAGTTGIVLNQAFKQALTFAKRMHDTYRINDRPISIGLTAIQELDRMGLDYSTKKIAVIGLGEIGQLVTKYALQRPFESVMLLNRTVSKAQAFLTEDRVSAHGWDELEEVLADADVVFSAVKTEEYIIFPSMLKEGAIVFDLCLPRSCHPSSSLKLYNIENLTNQLEQYKAERQEIAGRIALEIDEELVKFADWRQQLGIIPLIQEIRDKALEAQASAMESLNRKIPDLTEREQKQISKHMKSIINQVLKEPILQLKELSVGEHSDYDIALIAKIFGLHRERGKDEGH.

Residues 49 to 52, Ser-109, 114 to 116, and Gln-120 contribute to the substrate site; these read TCNR and ESQ. Cys-50 functions as the Nucleophile in the catalytic mechanism. 189–194 lines the NADP(+) pocket; sequence GLGEIG.

It belongs to the glutamyl-tRNA reductase family. Homodimer.

The enzyme catalyses (S)-4-amino-5-oxopentanoate + tRNA(Glu) + NADP(+) = L-glutamyl-tRNA(Glu) + NADPH + H(+). Its pathway is porphyrin-containing compound metabolism; protoporphyrin-IX biosynthesis; 5-aminolevulinate from L-glutamyl-tRNA(Glu): step 1/2. In terms of biological role, catalyzes the NADPH-dependent reduction of glutamyl-tRNA(Glu) to glutamate 1-semialdehyde (GSA). This Streptococcus sanguinis (strain SK36) protein is Glutamyl-tRNA reductase.